The sequence spans 224 residues: Octanoyltransferase (224 aa).

The 196-residue stretch at 29-224 (PGTPDELWLC…GDRLESYLSP (196 aa)) folds into the BPL/LPL catalytic domain. Residues 68–75 (RGGQVTYH), 157–159 (ALG), and 170–172 (GLA) contribute to the substrate site. Cys188 serves as the catalytic Acyl-thioester intermediate.

The protein belongs to the LipB family.

It is found in the cytoplasm. It catalyses the reaction octanoyl-[ACP] + L-lysyl-[protein] = N(6)-octanoyl-L-lysyl-[protein] + holo-[ACP] + H(+). It functions in the pathway protein modification; protein lipoylation via endogenous pathway; protein N(6)-(lipoyl)lysine from octanoyl-[acyl-carrier-protein]: step 1/2. Functionally, catalyzes the transfer of endogenously produced octanoic acid from octanoyl-acyl-carrier-protein onto the lipoyl domains of lipoate-dependent enzymes. Lipoyl-ACP can also act as a substrate although octanoyl-ACP is likely to be the physiological substrate. The chain is Octanoyltransferase from Methylibium petroleiphilum (strain ATCC BAA-1232 / LMG 22953 / PM1).